The primary structure comprises 238 residues: Purine nucleoside phosphorylase DeoD-type (238 aa).

His-4 provides a ligand contact to a purine D-ribonucleoside. Phosphate-binding positions include Gly-20, Arg-24, Arg-43, and 87-90 (RVGS). A purine D-ribonucleoside contacts are provided by residues 179–181 (EME) and 203–204 (SD). Asp-204 acts as the Proton donor in catalysis.

Belongs to the PNP/UDP phosphorylase family. As to quaternary structure, homohexamer; trimer of homodimers.

It catalyses the reaction a purine D-ribonucleoside + phosphate = a purine nucleobase + alpha-D-ribose 1-phosphate. It carries out the reaction a purine 2'-deoxy-D-ribonucleoside + phosphate = a purine nucleobase + 2-deoxy-alpha-D-ribose 1-phosphate. Functionally, catalyzes the reversible phosphorolytic breakdown of the N-glycosidic bond in the beta-(deoxy)ribonucleoside molecules, with the formation of the corresponding free purine bases and pentose-1-phosphate. The chain is Purine nucleoside phosphorylase DeoD-type from Haemophilus influenzae (strain 86-028NP).